A 447-amino-acid polypeptide reads, in one-letter code: Adenylosuccinate synthetase (447 aa).

Residues 35 to 41 and 63 to 65 contribute to the GTP site; these read GDEGKGK and GHT. D36 acts as the Proton acceptor in catalysis. 2 residues coordinate Mg(2+): D36 and G63. IMP is bound by residues 36 to 39, 61 to 64, T153, R167, N245, T260, and R324; these read DEGK and NAGH. H64 serves as the catalytic Proton donor. 320–326 contacts substrate; it reads VTTKRKR. GTP is bound by residues R326, 352–354, and 435–437; these read KLD and GVG.

It belongs to the adenylosuccinate synthetase family. As to quaternary structure, homodimer. Requires Mg(2+) as cofactor.

It is found in the cytoplasm. The catalysed reaction is IMP + L-aspartate + GTP = N(6)-(1,2-dicarboxyethyl)-AMP + GDP + phosphate + 2 H(+). Its pathway is purine metabolism; AMP biosynthesis via de novo pathway; AMP from IMP: step 1/2. In terms of biological role, plays an important role in the de novo pathway and in the salvage pathway of purine nucleotide biosynthesis. Catalyzes the first committed step in the biosynthesis of AMP from IMP. This is Adenylosuccinate synthetase from Drosophila erecta (Fruit fly).